The sequence spans 346 residues: Small glutamine-rich tetratricopeptide repeat-containing protein 2 (346 aa).

4 TPR repeats span residues 102 to 135 (AEDLKMQGNKAMANKDYELAINKYTEAIKVLPTN), 136 to 169 (AIYYANRAAAHSSLKEYDQAVKDAESAISIDPSY), 170 to 203 (FRGYSRLGFAKYAQGKPEEALEAYKKVLDIEGDN), and 205 to 229 (TEAMKRDYESAKKKVEQSLNLEKTV). Residues 219-249 (VEQSLNLEKTVPEQSRDADVDASQGASAGGL) form a disordered region. Over residues 228–237 (TVPEQSRDAD) the composition is skewed to basic and acidic residues. Thr308 bears the Phosphothreonine mark. A disordered region spans residues 325-346 (GNLFGGAGAQSTDETPDNENKQ).

The protein belongs to the SGT family. Interacts with HSC82, HSP104, MDY2, SSA1 and SSA2.

The protein resides in the cytoplasm. Functionally, co-chaperone that binds to the molecular chaperone Hsp70 (SSA1 and SSA2). Regulates Hsp70 ATPase activity. Required for recovery from heat shock. The chain is Small glutamine-rich tetratricopeptide repeat-containing protein 2 (SGT2) from Saccharomyces cerevisiae (strain ATCC 204508 / S288c) (Baker's yeast).